The sequence spans 829 residues: RNA-directed RNA polymerase (829 aa).

Residues 1–39 (MKEPVDCRLSTPAGFSGTVPPPGRTKAARPGTIPVRRSR) are disordered.

Forms a ribonucleoprotein complex with the 20S RNA, where a single polymerase molecule binds to a single viral RNA genome. Since the viral RNA is not encapsidated, ribonucleoprotein complex formation appears to be the strategy to survive in the host as persistent virus.

It localises to the host cytoplasm. It catalyses the reaction RNA(n) + a ribonucleoside 5'-triphosphate = RNA(n+1) + diphosphate. Its function is as follows. RNA-directed RNA polymerase that replicates the viral (+) and (-) genome. This chain is RNA-directed RNA polymerase, found in Saccharomyces cerevisiae (Baker's yeast).